Here is a 390-residue protein sequence, read N- to C-terminus: Aspergillopepsin-1 (390 aa).

An N-terminal signal peptide occupies residues 1–19; sequence MVNTSLLAALTAYAVAVSA. The propeptide at 20-67 is activation peptide; that stretch reads APTAPQVKGFSVNQVAVPKGVYRHPAAQLAKAYGKYHATVPTQVAAAA. Residue T70 is glycosylated (O-linked (Man...) threonine). Residues 84–387 enclose the Peptidase A1 domain; the sequence is YITQVTVGDD…DASGPRLGFA (304 aa). Active-site residues include D100 and D281.

It belongs to the peptidase A1 family.

The protein localises to the secreted. The catalysed reaction is Hydrolysis of proteins with broad specificity. Generally favors hydrophobic residues in P1 and P1', but also accepts Lys in P1, which leads to activation of trypsinogen. Does not clot milk.. With respect to regulation, inhibited by the microbial peptide pepstatin. In terms of biological role, secreted aspartic endopeptidase that allows assimilation of proteinaceous substrates. The scissile peptide bond is attacked by a nucleophilic water molecule activated by two aspartic residues in the active site. Shows a broad primary substrate specificity. Favors hydrophobic residues at the P1 and P1' positions, but also accepts a lysine residue in the P1 position, leading to the activation of trypsinogen and chymotrypsinogen A. The polypeptide is Aspergillopepsin-1 (pepA) (Aspergillus oryzae (Yellow koji mold)).